Here is a 251-residue protein sequence, read N- to C-terminus: ATP synthase subunit a (251 aa).

Helical transmembrane passes span N30–L50, F86–F106, I116–W136, F145–V165, F195–L215, and I219–L239.

The protein belongs to the ATPase A chain family. As to quaternary structure, F-type ATPases have 2 components, CF(1) - the catalytic core - and CF(0) - the membrane proton channel. CF(1) has five subunits: alpha(3), beta(3), gamma(1), delta(1), epsilon(1). CF(0) has three main subunits: a(1), b(2) and c(9-12). The alpha and beta chains form an alternating ring which encloses part of the gamma chain. CF(1) is attached to CF(0) by a central stalk formed by the gamma and epsilon chains, while a peripheral stalk is formed by the delta and b chains.

It localises to the cell inner membrane. Functionally, key component of the proton channel; it plays a direct role in the translocation of protons across the membrane. In Acidiphilium cryptum (strain JF-5), this protein is ATP synthase subunit a.